The sequence spans 412 residues: CCA-adding enzyme (412 aa).

Ser41 and Lys44 together coordinate ATP. Positions 41 and 44 each coordinate CTP. The Mg(2+) site is built by Asp53, Asp55, and Asp106. ATP is bound by residues His129, Lys149, and Tyr158. His129, Lys149, and Tyr158 together coordinate CTP.

Belongs to the tRNA nucleotidyltransferase/poly(A) polymerase family. Archaeal CCA-adding enzyme subfamily. Homodimer. It depends on Mg(2+) as a cofactor.

It carries out the reaction a tRNA precursor + 2 CTP + ATP = a tRNA with a 3' CCA end + 3 diphosphate. It catalyses the reaction a tRNA with a 3' CCA end + 2 CTP + ATP = a tRNA with a 3' CCACCA end + 3 diphosphate. In terms of biological role, catalyzes the addition and repair of the essential 3'-terminal CCA sequence in tRNAs without using a nucleic acid template. Adds these three nucleotides in the order of C, C, and A to the tRNA nucleotide-73, using CTP and ATP as substrates and producing inorganic pyrophosphate. tRNA 3'-terminal CCA addition is required both for tRNA processing and repair. Also involved in tRNA surveillance by mediating tandem CCA addition to generate a CCACCA at the 3' terminus of unstable tRNAs. While stable tRNAs receive only 3'-terminal CCA, unstable tRNAs are marked with CCACCA and rapidly degraded. The polypeptide is CCA-adding enzyme (Saccharolobus islandicus (strain Y.N.15.51 / Yellowstone #2) (Sulfolobus islandicus)).